We begin with the raw amino-acid sequence, 214 residues long: ER lumen protein-retaining receptor 3 (214 aa).

The Lumenal portion of the chain corresponds to 1–4 (MNVF). Residues 5 to 24 (RILGDLSHLLAMILLLVKIW) traverse the membrane as a helical segment. Residues 25–32 (RSKSCAGI) lie on the Cytoplasmic side of the membrane. The helical transmembrane segment at 33-52 (SGKSQILFALVFTTRYLDLF) threads the bilayer. An interaction with the K-D-E-L motif on target proteins region spans residues 47-48 (RY). Residues 53-58 (SNFISI) are Lumenal-facing. A helical transmembrane segment spans residues 59 to 79 (YNTVMKVVFLLCAYVTVYMIY). Residues 80–92 (WKFRKTFDIENDT) are Cytoplasmic-facing. A helical transmembrane segment spans residues 93 to 110 (FRLEFLLVPVTGLSFLVN). Residues 111 to 116 (YSYTPM) are Lumenal-facing. The helical transmembrane segment at 117–135 (EVLWTFSIYLESVAILPQL) threads the bilayer. The Cytoplasmic portion of the chain corresponds to 136-149 (FMISKTGEAETITT). The chain crosses the membrane as a helical span at residues 150–168 (HYLFFLGLYRLLYLANWIR). An interaction with the K-D-E-L motif on target proteins region spans residues 159–169 (RLLYLANWIRR). At 169 to 178 (RYQTENFYDQ) the chain is on the lumenal side. The helical transmembrane segment at 179–199 (ISVVSGVVQTIFYCDFFYLYV) threads the bilayer. Residues 200 to 214 (TKVLKGKKLSLPVPV) are Cytoplasmic-facing. The important for recycling of cargo proteins with the sequence motif K-D-E-L from the Golgi to the endoplasmic reticulum stretch occupies residues 204–207 (KGKK).

Belongs to the ERD2 family.

It is found in the endoplasmic reticulum membrane. The protein resides in the golgi apparatus membrane. The protein localises to the cytoplasmic vesicle. Its subcellular location is the COPI-coated vesicle membrane. Its function is as follows. Receptor for the C-terminal sequence motif K-D-E-L that is present on endoplasmic reticulum resident proteins and that mediates their recycling from the Golgi back to the endoplasmic reticulum. The sequence is that of ER lumen protein-retaining receptor 3 (Kdelr3) from Mus musculus (Mouse).